The following is a 423-amino-acid chain: Innexin eat-5 (423 aa).

4 helical membrane passes run tyrosine 25 to alanine 41, proline 102 to leucine 122, isoleucine 277 to isoleucine 297, and histidine 341 to leucine 361.

Belongs to the pannexin family. As to quaternary structure, heterooligomer of eat-5 and another innexin. As to expression, expressed in pharyngeal muscles.

It localises to the cell membrane. Its subcellular location is the cell junction. The protein resides in the gap junction. Functionally, structural component of the gap junctions. Required for synchronized pharyngeal muscle contractions. In Caenorhabditis elegans, this protein is Innexin eat-5 (eat-5).